The chain runs to 99 residues: DNA-binding protein HU (99 aa).

The interval 67–86 (REGRNPKTGAKMKIDAYNQP) is disordered.

It belongs to the bacterial histone-like protein family. As to quaternary structure, homodimer.

In terms of biological role, histone-like DNA-binding protein which is capable of wrapping DNA to stabilize it, and thus to prevent its denaturation under extreme environmental conditions. This chain is DNA-binding protein HU (hup), found in Rickettsia felis (strain ATCC VR-1525 / URRWXCal2) (Rickettsia azadi).